Here is a 485-residue protein sequence, read N- to C-terminus: GTPase Der (485 aa).

EngA-type G domains follow at residues 3–167 (PTIA…PEPE) and 176–349 (PVFA…NAAM). Residues 9–16 (GRPNVGKS), 56–60 (DTGGF), 119–122 (NKGE), 182–189 (GRPNVGKS), 229–233 (DTAGV), and 294–297 (NKWD) each bind GTP. Residues 350–434 (IKMPTPKITR…PLRIQYNVSE (85 aa)) enclose the KH-like domain. The interval 435 to 485 (NPYENADDKPKKKPLRRVSLSNRIEKREGRKEEKNRFKKKTKVSVKKQFSK) is disordered. Positions 457–469 (RIEKREGRKEEKN) are enriched in basic and acidic residues. A compositionally biased stretch (basic residues) spans 470–485 (RFKKKTKVSVKKQFSK).

It belongs to the TRAFAC class TrmE-Era-EngA-EngB-Septin-like GTPase superfamily. EngA (Der) GTPase family. In terms of assembly, associates with the 50S ribosomal subunit.

Its function is as follows. GTPase that plays an essential role in the late steps of ribosome biogenesis. In Neisseria meningitidis serogroup A / serotype 4A (strain DSM 15465 / Z2491), this protein is GTPase Der.